The primary structure comprises 61 residues: Small ribosomal subunit protein uS14 (61 aa).

4 residues coordinate Zn(2+): Cys-24, Cys-27, Cys-40, and Cys-43.

It belongs to the universal ribosomal protein uS14 family. Zinc-binding uS14 subfamily. Part of the 30S ribosomal subunit. Contacts proteins S3 and S10. Zn(2+) is required as a cofactor.

Binds 16S rRNA, required for the assembly of 30S particles and may also be responsible for determining the conformation of the 16S rRNA at the A site. The protein is Small ribosomal subunit protein uS14 of Deinococcus deserti (strain DSM 17065 / CIP 109153 / LMG 22923 / VCD115).